Reading from the N-terminus, the 168-residue chain is Photosystem I assembly protein Ycf3 (168 aa).

TPR repeat units lie at residues 35-68 (AFTY…EMDP), 72-105 (SYIL…NPFL), and 120-153 (GEQA…TPGN).

This sequence belongs to the Ycf3 family.

The protein localises to the plastid. Its subcellular location is the chloroplast thylakoid membrane. In terms of biological role, essential for the assembly of the photosystem I (PSI) complex. May act as a chaperone-like factor to guide the assembly of the PSI subunits. This is Photosystem I assembly protein Ycf3 from Plantago lanceolata (English plantain).